A 474-amino-acid polypeptide reads, in one-letter code: Isoflavone 7-O-glucosyltransferase 1 (474 aa).

Residues 1-49 (MKDTIVLYPNLGRGHLVSMVELGKLILTHHPSLSITILILTPPTTPSTT) constitute a propeptide, removed in mature form. Histidine 15 serves as the catalytic Proton acceptor. Histidine 15 provides a ligand contact to an anthocyanidin. Residue aspartate 125 is the Charge relay of the active site. UDP-alpha-D-glucose contacts are provided by threonine 150, alanine 351, glutamine 353, histidine 368, tryptophan 371, asparagine 372, serine 373, and glutamate 376. Alanine 391 is a binding site for an anthocyanidin. UDP-alpha-D-glucose contacts are provided by glutamate 392 and glutamine 393.

Belongs to the UDP-glycosyltransferase family. In terms of assembly, monomer. In terms of tissue distribution, expressed in shoots, leaves, cotyledons, epicotyls, hypocotyls, roots, pods, seeds and flowers.

The catalysed reaction is a 7-hydroxyisoflavone + UDP-alpha-D-glucose = a 7-hydroxyisoflavone 7-O-beta-D-glucoside + UDP + H(+). Its function is as follows. Involved in the biosynthesis of isoflavonoids. Specific for UDP-glucose. Can use genistein &gt; daidzein &gt; formononetin &gt; quercetin &gt; kaempferol &gt; 4,2',4',6'-tetrahydroxychalcone &gt; apigenin &gt; aureusidin &gt; esculetin &gt; naringenin as substrates, but not cyanidin, trans-p-coumaric acid, caffeic acid, benzoic acid, m- and p-hydroxybenzoic acids, salicylic acid, salicyl alcohol, and hydroquinone. The protein is Isoflavone 7-O-glucosyltransferase 1 (GmIF7GT1) of Glycine max (Soybean).